Here is a 671-residue protein sequence, read N- to C-terminus: UvrABC system protein B (671 aa).

A Helicase ATP-binding domain is found at 25–412; that stretch reads EGIDAGLAHQ…AGRVVEQVVR (388 aa). 38-45 serves as a coordination point for ATP; it reads GVTGSGKT. A Beta-hairpin motif is present at residues 91 to 114; sequence YYDYYQPEAYVPSSDTFIEKDASI. The Helicase C-terminal domain occupies 429–595; sequence QVDDLLSEIH…GVFKDVADIM (167 aa). The disordered stretch occupies residues 600–624; the sequence is VPGSRSKKRKGMAKAAEENARYENE. Positions 614-624 are enriched in basic and acidic residues; it reads AAEENARYENE. In terms of domain architecture, UVR spans 632-667; the sequence is NKRIRQLEEKMYQLARDLEFEAAAQMRDEIGKLRER.

It belongs to the UvrB family. Forms a heterotetramer with UvrA during the search for lesions. Interacts with UvrC in an incision complex.

It is found in the cytoplasm. Functionally, the UvrABC repair system catalyzes the recognition and processing of DNA lesions. A damage recognition complex composed of 2 UvrA and 2 UvrB subunits scans DNA for abnormalities. Upon binding of the UvrA(2)B(2) complex to a putative damaged site, the DNA wraps around one UvrB monomer. DNA wrap is dependent on ATP binding by UvrB and probably causes local melting of the DNA helix, facilitating insertion of UvrB beta-hairpin between the DNA strands. Then UvrB probes one DNA strand for the presence of a lesion. If a lesion is found the UvrA subunits dissociate and the UvrB-DNA preincision complex is formed. This complex is subsequently bound by UvrC and the second UvrB is released. If no lesion is found, the DNA wraps around the other UvrB subunit that will check the other stand for damage. The polypeptide is UvrABC system protein B (Pseudomonas savastanoi pv. phaseolicola (strain 1448A / Race 6) (Pseudomonas syringae pv. phaseolicola (strain 1448A / Race 6))).